Here is a 121-residue protein sequence, read N- to C-terminus: Small ribosomal subunit protein uS13 (121 aa).

The segment at 91-121 (HRMSLPVRGQRTRTNARTRRGSRKTVAGRKK) is disordered. The segment covering 100-121 (QRTRTNARTRRGSRKTVAGRKK) has biased composition (basic residues).

The protein belongs to the universal ribosomal protein uS13 family. Part of the 30S ribosomal subunit. Forms a loose heterodimer with protein S19. Forms two bridges to the 50S subunit in the 70S ribosome.

In terms of biological role, located at the top of the head of the 30S subunit, it contacts several helices of the 16S rRNA. In the 70S ribosome it contacts the 23S rRNA (bridge B1a) and protein L5 of the 50S subunit (bridge B1b), connecting the 2 subunits; these bridges are implicated in subunit movement. Contacts the tRNAs in the A and P-sites. This is Small ribosomal subunit protein uS13 from Prochlorococcus marinus (strain MIT 9301).